The chain runs to 173 residues: Transcriptional repressor NrdR (173 aa).

A zinc finger spans residues Cys-3–Cys-34. Residues Pro-49–Asp-139 form the ATP-cone domain.

The protein belongs to the NrdR family. Requires Zn(2+) as cofactor.

Functionally, negatively regulates transcription of bacterial ribonucleotide reductase nrd genes and operons by binding to NrdR-boxes. This chain is Transcriptional repressor NrdR, found in Stenotrophomonas maltophilia (strain R551-3).